Consider the following 251-residue polypeptide: 3-deoxy-manno-octulosonate cytidylyltransferase (251 aa).

The protein belongs to the KdsB family.

It is found in the cytoplasm. The catalysed reaction is 3-deoxy-alpha-D-manno-oct-2-ulosonate + CTP = CMP-3-deoxy-beta-D-manno-octulosonate + diphosphate. It functions in the pathway nucleotide-sugar biosynthesis; CMP-3-deoxy-D-manno-octulosonate biosynthesis; CMP-3-deoxy-D-manno-octulosonate from 3-deoxy-D-manno-octulosonate and CTP: step 1/1. Its pathway is bacterial outer membrane biogenesis; lipopolysaccharide biosynthesis. In terms of biological role, activates KDO (a required 8-carbon sugar) for incorporation into bacterial lipopolysaccharide in Gram-negative bacteria. This is 3-deoxy-manno-octulosonate cytidylyltransferase from Brucella ovis (strain ATCC 25840 / 63/290 / NCTC 10512).